The following is a 256-amino-acid chain: Hemin import ATP-binding protein HmuV (256 aa).

The 237-residue stretch at 2 to 238 (ISAQNLVYSL…QALTMLYGAD (237 aa)) folds into the ABC transporter domain. Residue 34 to 41 (GPNGAGKS) coordinates ATP.

It belongs to the ABC transporter superfamily. Heme (hemin) importer (TC 3.A.1.14.5) family. The complex is composed of two ATP-binding proteins (HmuV), two transmembrane proteins (HmuU) and a solute-binding protein (HmuT).

It localises to the cell inner membrane. Its function is as follows. Part of the ABC transporter complex HmuTUV involved in hemin import. Responsible for energy coupling to the transport system. The sequence is that of Hemin import ATP-binding protein HmuV from Escherichia coli O6:K15:H31 (strain 536 / UPEC).